A 203-amino-acid polypeptide reads, in one-letter code: High-molecular weight cobalt-containing nitrile hydratase subunit alpha (203 aa).

Residues C102, C105, S106, and C107 each contribute to the Co(3+) site.

This sequence belongs to the nitrile hydratase subunit alpha family. Heterodimer of an alpha and a beta chain. Co(3+) serves as cofactor.

It catalyses the reaction an aliphatic primary amide = an aliphatic nitrile + H2O. NHase catalyzes the hydration of various nitrile compounds to the corresponding amides. In Rhodococcus rhodochrous, this protein is High-molecular weight cobalt-containing nitrile hydratase subunit alpha (nhhA).